The following is a 304-amino-acid chain: 33 kDa chaperonin (304 aa).

2 disulfides stabilise this stretch: C236–C238 and C269–C272.

Belongs to the HSP33 family. In terms of processing, under oxidizing conditions two disulfide bonds are formed involving the reactive cysteines. Under reducing conditions zinc is bound to the reactive cysteines and the protein is inactive.

Its subcellular location is the cytoplasm. Redox regulated molecular chaperone. Protects both thermally unfolding and oxidatively damaged proteins from irreversible aggregation. Plays an important role in the bacterial defense system toward oxidative stress. The chain is 33 kDa chaperonin from Pelobacter propionicus (strain DSM 2379 / NBRC 103807 / OttBd1).